The sequence spans 239 residues: Ribonuclease HII (239 aa).

The RNase H type-2 domain maps to 18–231 (KIIVGLDEAG…SKNLLKEIEE (214 aa)). Aspartate 24, glutamate 25, and aspartate 125 together coordinate a divalent metal cation.

It belongs to the RNase HII family. Requires Mn(2+) as cofactor. Mg(2+) is required as a cofactor.

Its subcellular location is the cytoplasm. It catalyses the reaction Endonucleolytic cleavage to 5'-phosphomonoester.. In terms of biological role, endonuclease that specifically degrades the RNA of RNA-DNA hybrids. The chain is Ribonuclease HII from Methanococcus maripaludis (strain C6 / ATCC BAA-1332).